The primary structure comprises 320 residues: UDP-N-acetylenolpyruvoylglucosamine reductase (320 aa).

The region spanning 35–216 is the FAD-binding PCMH-type domain; the sequence is RAGGPAQVLF…KQAMDEVQHH (182 aa). Arg181 is a catalytic residue. Ser230 serves as the catalytic Proton donor. The active site involves Glu300.

This sequence belongs to the MurB family. FAD is required as a cofactor.

It localises to the cytoplasm. The enzyme catalyses UDP-N-acetyl-alpha-D-muramate + NADP(+) = UDP-N-acetyl-3-O-(1-carboxyvinyl)-alpha-D-glucosamine + NADPH + H(+). Its pathway is cell wall biogenesis; peptidoglycan biosynthesis. In terms of biological role, cell wall formation. The protein is UDP-N-acetylenolpyruvoylglucosamine reductase of Brucella anthropi (strain ATCC 49188 / DSM 6882 / CCUG 24695 / JCM 21032 / LMG 3331 / NBRC 15819 / NCTC 12168 / Alc 37) (Ochrobactrum anthropi).